We begin with the raw amino-acid sequence, 440 residues long: L-seryl-tRNA(Sec) selenium transferase (440 aa).

Lysine 282 is subject to N6-(pyridoxal phosphate)lysine.

This sequence belongs to the SelA family. Requires pyridoxal 5'-phosphate as cofactor.

Its subcellular location is the cytoplasm. It carries out the reaction L-seryl-tRNA(Sec) + selenophosphate + H(+) = L-selenocysteinyl-tRNA(Sec) + phosphate. The protein operates within aminoacyl-tRNA biosynthesis; selenocysteinyl-tRNA(Sec) biosynthesis; selenocysteinyl-tRNA(Sec) from L-seryl-tRNA(Sec) (bacterial route): step 1/1. Converts seryl-tRNA(Sec) to selenocysteinyl-tRNA(Sec) required for selenoprotein biosynthesis. The sequence is that of L-seryl-tRNA(Sec) selenium transferase from Campylobacter jejuni (strain RM1221).